Consider the following 310-residue polypeptide: Putative carboxypeptidase SCO6489 (310 aa).

The active-site Nucleophile is Ser116. Active-site charge relay system residues include Glu212 and His277.

The protein belongs to the peptidase S66 family.

The chain is Putative carboxypeptidase SCO6489 from Streptomyces coelicolor (strain ATCC BAA-471 / A3(2) / M145).